We begin with the raw amino-acid sequence, 314 residues long: MPFAAVDIQDDCGSPDVPQANPKRSKEEEEDRGDKNDHVKKRKKAKKDYQPNYFLSIPITNKKITTGIKVLQNSILQQDKRLTKAMVGDGSFHITLLVMQLLNEDEVNIGTDALLELKPFVEEILEGKHLALPFQGIGTFQGQVGFVKLADGDHVSALLEIAETAKRTFREKGILAGESRTFKPHLTFMKLSKAPMLRKKGVRKIEPGLYEQFIDHRFGEELLYQIDLCSMLKKKQSNGYYHCESSIVIGEKDRREPEDAELVRLSKRLVENAVLKAVQQYLEETQNKKQPGEGNSTKAEEGDRNGDGSDNNRK.

Residues 1 to 46 (MPFAAVDIQDDCGSPDVPQANPKRSKEEEEDRGDKNDHVKKRKKAK) form a disordered region. Basic and acidic residues predominate over residues 24–37 (RSKEEEEDRGDKND). Residues T95 and 185–187 (HLT) contribute to the AMP site. Residues T95 and 185 to 187 (HLT) contribute to the CMP site. A PKA-RII-alpha subunit binding domain region spans residues 260–314 (AELVRLSKRLVENAVLKAVQQYLEETQNKKQPGEGNSTKAEEGDRNGDGSDNNRK). The segment at 261-285 (ELVRLSKRLVENAVLKAVQQYLEET) is RI-alpha-binding. The tract at residues 262–275 (LVRLSKRLVENAVL) is RII-binding. Positions 281–314 (YLEETQNKKQPGEGNSTKAEEGDRNGDGSDNNRK) are disordered. The segment covering 298–314 (KAEEGDRNGDGSDNNRK) has biased composition (basic and acidic residues).

In terms of assembly, binds cAMP-dependent protein kinase (PKA). Interacts with PRKCA; only the cytoplasmic form is capable of interacting with PRKCA. Expressed in oocytes.

The protein resides in the nucleus. Its subcellular location is the cytoplasm. Probably targets cAMP-dependent protein kinase (PKA) to the cellular membrane or cytoskeletal structures. The membrane-associated form reduces epithelial sodium channel (ENaC) activity, whereas the free cytoplasmic form may negatively regulate ENaC channel feedback inhibition by intracellular sodium. The chain is A-kinase anchor protein 7 isoform gamma from Mus musculus (Mouse).